Here is a 561-residue protein sequence, read N- to C-terminus: Lysine--tRNA ligase (561 aa).

Residues Glu409 and Glu416 each coordinate Mg(2+).

Belongs to the class-II aminoacyl-tRNA synthetase family. Homodimer. The cofactor is Mg(2+).

The protein resides in the cytoplasm. It carries out the reaction tRNA(Lys) + L-lysine + ATP = L-lysyl-tRNA(Lys) + AMP + diphosphate. The chain is Lysine--tRNA ligase from Nostoc sp. (strain PCC 7120 / SAG 25.82 / UTEX 2576).